The following is a 355-amino-acid chain: Cobalt-precorrin-5B C(1)-methyltransferase (355 aa).

It belongs to the CbiD family.

The enzyme catalyses Co-precorrin-5B + S-adenosyl-L-methionine = Co-precorrin-6A + S-adenosyl-L-homocysteine. It functions in the pathway cofactor biosynthesis; adenosylcobalamin biosynthesis; cob(II)yrinate a,c-diamide from sirohydrochlorin (anaerobic route): step 6/10. In terms of biological role, catalyzes the methylation of C-1 in cobalt-precorrin-5B to form cobalt-precorrin-6A. This is Cobalt-precorrin-5B C(1)-methyltransferase from Parasynechococcus marenigrum (strain WH8102).